The following is a 147-amino-acid chain: Ribosome-binding factor A (147 aa).

The interval Leu-123–Asp-147 is disordered.

This sequence belongs to the RbfA family. Monomer. Binds 30S ribosomal subunits, but not 50S ribosomal subunits or 70S ribosomes.

The protein resides in the cytoplasm. One of several proteins that assist in the late maturation steps of the functional core of the 30S ribosomal subunit. Associates with free 30S ribosomal subunits (but not with 30S subunits that are part of 70S ribosomes or polysomes). Required for efficient processing of 16S rRNA. May interact with the 5'-terminal helix region of 16S rRNA. The sequence is that of Ribosome-binding factor A from Corynebacterium aurimucosum (strain ATCC 700975 / DSM 44827 / CIP 107346 / CN-1) (Corynebacterium nigricans).